Here is a 604-residue protein sequence, read N- to C-terminus: Prostaglandin G/H synthase 2 (604 aa).

The N-terminal stretch at 1–17 (MLARAGLLCASLSPPHA) is a signal peptide. Positions 18 to 55 (ANPCCSNPCQNQGVCMSIGFDQYMCDCSRTGFYGENCS) constitute an EGF-like domain. 4 cysteine pairs are disulfide-bonded: C21–C32, C22–C145, C26–C42, and C44–C54. N-linked (GlcNAc...) asparagine glycosylation is present at N53. R106 is a substrate binding site. A glycan (N-linked (GlcNAc...) asparagine) is linked at N130. The active-site Proton acceptor is H193. Y341 is a substrate binding site. The For cyclooxygenase activity role is filled by Y371. H374 contacts heme b. An N-linked (GlcNAc...) asparagine glycan is attached at N396. An S-nitrosocysteine modification is found at C526. C555 and C561 are disulfide-bonded. N580 carries N-linked (GlcNAc...) asparagine glycosylation.

The protein belongs to the prostaglandin G/H synthase family. As to quaternary structure, homodimer. Heme b is required as a cofactor. In terms of processing, S-nitrosylation by NOS2 (iNOS) activates enzyme activity. S-nitrosylation may take place on different Cys residues in addition to Cys-526.

The protein localises to the microsome membrane. The protein resides in the endoplasmic reticulum membrane. Its subcellular location is the nucleus inner membrane. It localises to the nucleus outer membrane. The catalysed reaction is (5Z,8Z,11Z,14Z)-eicosatetraenoate + AH2 + 2 O2 = prostaglandin H2 + A + H2O. It catalyses the reaction (5Z,8Z,11Z,14Z)-eicosatetraenoate + 2 O2 = prostaglandin G2. It carries out the reaction prostaglandin G2 + AH2 = prostaglandin H2 + A + H2O. The enzyme catalyses (5Z,8Z,11Z,14Z,17Z)-eicosapentaenoate + 2 O2 = prostaglandin G3. The catalysed reaction is prostaglandin G3 + AH2 = prostaglandin H3 + A + H2O. It catalyses the reaction (8Z,11Z,14Z)-eicosatrienoate + 2 O2 = prostaglandin G1. It carries out the reaction prostaglandin G1 + AH2 = prostaglandin H1 + A + H2O. The enzyme catalyses 2-(5Z,8Z,11Z,14Z)-eicosatetraenoyl-sn-glycero-3-phosphoethanolamine + 2 O2 = 2-(prostaglandin G2)-sn-glycero-3-phosphoethanolamine. The catalysed reaction is 2-(prostaglandin G2)-sn-glycero-3-phosphoethanolamine + AH2 = 2-(prostaglandin H2)-sn-glycero-3-phosphoethanolamine + A + H2O. It catalyses the reaction 2-(5Z,8Z,11Z,14Z)-eicosatetraenoyl-sn-glycero-3-phosphocholine + 2 O2 = 2-(prostaglandin G2)-sn-glycero-3-phosphocholine. It carries out the reaction 2-(prostaglandin G2)-sn-glycero-3-phosphocholine + AH2 = 2-(prostaglandin H2)-sn-glycero-3-phosphocholine + A + H2O. The enzyme catalyses (15S)-hydroperoxy-(5Z,8Z,11Z,13E)-eicosatetraenoate + AH2 = (15S)-hydroxy-(5Z,8Z,11Z,13E)-eicosatetraenoate + A + H2O. The catalysed reaction is 2-(5Z,8Z,11Z,14Z)-eicosatetraenoyl-sn-glycero-3-phosphocholine + AH2 + O2 = 2-[(15S)-hydroxy-(5Z,8Z,11Z,13E)-eicosatetraenoyl]-sn-glycero-3-phosphocholine + A + H2O. It catalyses the reaction 2-(5Z,8Z,11Z,14Z)-eicosatetraenoyl-sn-glycero-3-phosphocholine + AH2 + O2 = 2-[(15R)-hydroxy-(5Z,8Z,11Z,13E)-eicosatetraenoyl]-sn-glycero-3-phosphocholine + A + H2O. It carries out the reaction 2-(5Z,8Z,11Z,14Z)-eicosatetraenoyl-sn-glycero-3-phosphocholine + AH2 + O2 = 2-[(11R)-hydroxy-(5Z,8Z,12E,14Z)-eicosatetraenoyl]-sn-glycero-3-phosphocholine + A + H2O. The enzyme catalyses (9Z,12Z)-octadecadienoate + AH2 + O2 = 9-hydroxy-(10E,12Z)-octadecadienoate + A + H2O. The catalysed reaction is (9Z,12Z)-octadecadienoate + AH2 + O2 = 13-hydroxy-(9Z,11E)-octadecadienoate + A + H2O. It catalyses the reaction (5Z,8Z,11Z,14Z)-eicosatetraenoate + AH2 + O2 = (15R)-hydroxy-(5Z,8Z,11Z,13E)-eicosatetraenoate + A + H2O. It carries out the reaction (5Z,8Z,11Z,14Z)-eicosatetraenoate + AH2 + O2 = (11R)-hydroxy-(5Z,8Z,12E,14Z)-eicosatetraenoate + A + H2O. The enzyme catalyses (5Z,8Z,11Z,14Z,17Z)-eicosapentaenoate + AH2 + O2 = (11R)-hydroxy-(5Z,8Z,12E,14Z,17Z)-eicosapentaenoate + A + H2O. The catalysed reaction is (5Z,8Z,11Z,14Z,17Z)-eicosapentaenoate + AH2 + O2 = (18S)-hydroxy-(5Z,8Z,11Z,14Z,16E)-eicosapentaenoate + A + H2O. It catalyses the reaction (5Z,8Z,11Z,14Z,17Z)-eicosapentaenoate + AH2 + O2 = (18R)-hydroxy-(5Z,8Z,11Z,14Z,16E)-eicosapentaenoate + A + H2O. It carries out the reaction (5Z,8Z,11Z,14Z,17Z)-eicosapentaenoate + AH2 + O2 = (15R)-hydroxy-(5Z,8Z,11Z,13E,17Z)-eicosapentaenoate + A + H2O. The enzyme catalyses (5Z,8Z,11Z,14Z,17Z)-eicosapentaenoate + AH2 + O2 = (15S)-hydroxy-(5Z,8Z,11Z,13E,17Z)-eicosapentaenoate + A + H2O. The catalysed reaction is (7Z,10Z,13Z,16Z,19Z)-docosapentaenoate + AH2 + O2 = 13R-hydroxy-(7Z,10Z,14E,16Z,19Z)-docosapentaenoate + A + H2O. It catalyses the reaction (4Z,7Z,10Z,13Z,16Z,19Z)-docosahexaenoate + AH2 + O2 = 13-hydroxy-(4Z,7Z,10Z,14E,16Z,19Z)-docosahexaenoate + A + H2O. It carries out the reaction (5S)-hydroxy-(6E,8Z,11Z,14Z)-eicosatetraenoate + AH2 + O2 = (5S,15R)-dihydroxy-(6E,8Z,11Z,13E)-eicosatetraenoate + A + H2O. The enzyme catalyses (4Z,7Z,10Z,13Z,16Z,19Z)-docosahexaenoate + AH2 + O2 = 17R-hydroxy-(4Z,7Z,10Z,13Z,15E,19Z)-docosahexaenoate + A + H2O. The catalysed reaction is (5S)-hydroxy-(6E,8Z,11Z,14Z)-eicosatetraenoate + AH2 + O2 = (5S,15S)-dihydroxy-(6E,8Z,11Z,13E)-eicosatetraenoate + A + H2O. It catalyses the reaction (5S)-hydroxy-(6E,8Z,11Z,14Z)-eicosatetraenoate + AH2 + O2 = (5S,11R)-dihydroxy-(6E,8Z,12E,14Z)-eicosatetraenoate + A + H2O. It carries out the reaction 2-(5Z,8Z,11Z,14Z-eicosatetraenoyl)-glycerol + 2 O2 = 2-glyceryl-prostaglandin G2. The enzyme catalyses 2-glyceryl-prostaglandin G2 + AH2 = 2-glyceryl-prostaglandin H2 + A + H2O. The catalysed reaction is (5Z,8Z,11Z,14Z)-eicosatetraenoate + O2 = (15R)-hydroperoxy-(5Z,8Z,11Z,13E)-eicosatetraenoate. It catalyses the reaction (5Z,8Z,11Z,14Z)-eicosatetraenoate + O2 = 11R-hydroperoxy-(5Z,8Z,12E,14Z)-eicosatetraenoate. It carries out the reaction (9Z,12Z)-octadecadienoate + AH2 + O2 = (9R)-hydroxy-(10E,12Z)-octadecadienoate + A + H2O. The enzyme catalyses (9Z,12Z)-octadecadienoate + AH2 + O2 = (9S)-hydroxy-(10E,12Z)-octadecadienoate + A + H2O. The catalysed reaction is (9Z,12Z)-octadecadienoate + AH2 + O2 = (13S)-hydroxy-(9Z,11E)-octadecadienoate + A + H2O. It catalyses the reaction (9Z,12Z)-octadecadienoate + AH2 + O2 = (13R)-hydroxy-(9Z,11E)-octadecadienoate + A + H2O. Its pathway is lipid metabolism; prostaglandin biosynthesis. Dual cyclooxygenase and peroxidase in the biosynthesis pathway of prostanoids, a class of C20 oxylipins mainly derived from arachidonate ((5Z,8Z,11Z,14Z)-eicosatetraenoate, AA, C20:4(n-6)), with a particular role in the inflammatory response. The cyclooxygenase activity oxygenates AA to the hydroperoxy endoperoxide prostaglandin G2 (PGG2), and the peroxidase activity reduces PGG2 to the hydroxy endoperoxide prostaglandin H2 (PGH2), the precursor of all 2-series prostaglandins and thromboxanes. This complex transformation is initiated by abstraction of hydrogen at carbon 13 (with S-stereochemistry), followed by insertion of molecular O2 to form the endoperoxide bridge between carbon 9 and 11 that defines prostaglandins. The insertion of a second molecule of O2 (bis-oxygenase activity) yields a hydroperoxy group in PGG2 that is then reduced to PGH2 by two electrons. Similarly catalyzes successive cyclooxygenation and peroxidation of dihomo-gamma-linoleate (DGLA, C20:3(n-6)) and eicosapentaenoate (EPA, C20:5(n-3)) to corresponding PGH1 and PGH3, the precursors of 1- and 3-series prostaglandins. In an alternative pathway of prostanoid biosynthesis, converts 2-arachidonoyl lysophopholipids to prostanoid lysophopholipids, which are then hydrolyzed by intracellular phospholipases to release free prostanoids. Metabolizes 2-arachidonoyl glycerol yielding the glyceryl ester of PGH2, a process that can contribute to pain response. Generates lipid mediators from n-3 and n-6 polyunsaturated fatty acids (PUFAs) via a lipoxygenase-type mechanism. Oxygenates PUFAs to hydroperoxy compounds and then reduces them to corresponding alcohols. Plays a role in the generation of resolution phase interaction products (resolvins) during both sterile and infectious inflammation. Metabolizes docosahexaenoate (DHA, C22:6(n-3)) to 17R-HDHA, a precursor of the D-series resolvins (RvDs). As a component of the biosynthetic pathway of E-series resolvins (RvEs), converts eicosapentaenoate (EPA, C20:5(n-3)) primarily to 18S-HEPE that is further metabolized by ALOX5 and LTA4H to generate 18S-RvE1 and 18S-RvE2. In vascular endothelial cells, converts docosapentaenoate (DPA, C22:5(n-3)) to 13R-HDPA, a precursor for 13-series resolvins (RvTs) shown to activate macrophage phagocytosis during bacterial infection. In activated leukocytes, contributes to oxygenation of hydroxyeicosatetraenoates (HETE) to diHETES (5,15-diHETE and 5,11-diHETE). Can also use linoleate (LA, (9Z,12Z)-octadecadienoate, C18:2(n-6)) as substrate and produce hydroxyoctadecadienoates (HODEs) in a regio- and stereospecific manner, being (9R)-HODE ((9R)-hydroxy-(10E,12Z)-octadecadienoate) and (13S)-HODE ((13S)-hydroxy-(9Z,11E)-octadecadienoate) its major products. During neuroinflammation, plays a role in neuronal secretion of specialized preresolving mediators (SPMs) 15R-lipoxin A4 that regulates phagocytic microglia. The protein is Prostaglandin G/H synthase 2 (PTGS2) of Neovison vison (American mink).